The sequence spans 342 residues: Deoxyhypusine synthase regulatory subunit (342 aa).

Residues 72–76, 98–100, glutamate 104, aspartate 213, 282–283, and 316–317 contribute to the NAD(+) site; these read SNLIS, TAG, TG, and DA.

It belongs to the deoxyhypusine synthase family. As to quaternary structure, heterotetramer formed by a homodimer of the non-catalytic regulatory subunit DHSp and a homodimer of the catalytic subunit DHSc where DHSc appears to bind spermidine and DHSp appears to bind NAD(+).

It participates in protein modification; eIF5A hypusination. In terms of biological role, required for the activation and stability of deoxyhypusine synthase DHSc. Required for cell growth and survival. The protein is Deoxyhypusine synthase regulatory subunit of Trypanosoma brucei brucei (strain 927/4 GUTat10.1).